The chain runs to 206 residues: Urease accessory protein UreG (206 aa).

A GTP-binding site is contributed by G14–T21.

The protein belongs to the SIMIBI class G3E GTPase family. UreG subfamily. As to quaternary structure, homodimer. UreD, UreF and UreG form a complex that acts as a GTP-hydrolysis-dependent molecular chaperone, activating the urease apoprotein by helping to assemble the nickel containing metallocenter of UreC. The UreE protein probably delivers the nickel.

The protein resides in the cytoplasm. Its function is as follows. Facilitates the functional incorporation of the urease nickel metallocenter. This process requires GTP hydrolysis, probably effectuated by UreG. The polypeptide is Urease accessory protein UreG (Aliivibrio fischeri (strain ATCC 700601 / ES114) (Vibrio fischeri)).